A 102-amino-acid chain; its full sequence is Large ribosomal subunit protein bL21 (102 aa).

The protein belongs to the bacterial ribosomal protein bL21 family. As to quaternary structure, part of the 50S ribosomal subunit. Contacts protein L20.

Its function is as follows. This protein binds to 23S rRNA in the presence of protein L20. This is Large ribosomal subunit protein bL21 from Bacillus pumilus (strain SAFR-032).